The following is a 117-amino-acid chain: Tyrosine-protein phosphatase 25 (117 aa).

One can recognise a Tyrosine-protein phosphatase domain in the interval 1 to 117 (WLMIIEQKCN…DLIGQSPIVV (117 aa)). Residue D85 coordinates substrate.

It belongs to the protein-tyrosine phosphatase family.

The enzyme catalyses O-phospho-L-tyrosyl-[protein] + H2O = L-tyrosyl-[protein] + phosphate. This chain is Tyrosine-protein phosphatase 25 (STY-25), found in Styela plicata (Wrinkled sea squirt).